The following is a 176-amino-acid chain: Xanthine-guanine phosphoribosyltransferase (176 aa).

5-phospho-alpha-D-ribose 1-diphosphate contacts are provided by residues 51 to 52 (RG), arginine 88, and 111 to 119 (DDLVDSGKT). Residue arginine 88 coordinates GMP. Aspartate 112 serves as a coordination point for Mg(2+). Aspartate 115 and isoleucine 158 together coordinate guanine. Xanthine is bound by residues aspartate 115 and isoleucine 158. Residues 115–119 (DSGKT) and 157–158 (WI) each bind GMP.

The protein belongs to the purine/pyrimidine phosphoribosyltransferase family. XGPT subfamily. As to quaternary structure, homotetramer. Mg(2+) serves as cofactor.

The protein localises to the cell inner membrane. The catalysed reaction is GMP + diphosphate = guanine + 5-phospho-alpha-D-ribose 1-diphosphate. The enzyme catalyses XMP + diphosphate = xanthine + 5-phospho-alpha-D-ribose 1-diphosphate. It catalyses the reaction IMP + diphosphate = hypoxanthine + 5-phospho-alpha-D-ribose 1-diphosphate. The protein operates within purine metabolism; GMP biosynthesis via salvage pathway; GMP from guanine: step 1/1. It functions in the pathway purine metabolism; XMP biosynthesis via salvage pathway; XMP from xanthine: step 1/1. Purine salvage pathway enzyme that catalyzes the transfer of the ribosyl-5-phosphate group from 5-phospho-alpha-D-ribose 1-diphosphate (PRPP) to the N9 position of the 6-oxopurines guanine and xanthine to form the corresponding ribonucleotides GMP (guanosine 5'-monophosphate) and XMP (xanthosine 5'-monophosphate), with the release of PPi. To a lesser extent, also acts on hypoxanthine. This is Xanthine-guanine phosphoribosyltransferase from Ruegeria sp. (strain TM1040) (Silicibacter sp.).